Here is an 80-residue protein sequence, read N- to C-terminus: Acyl carrier protein (80 aa).

The Carrier domain occupies 2 to 77 (KNIEERIKKI…KSIDFIQKKN (76 aa)). The residue at position 37 (serine 37) is an O-(pantetheine 4'-phosphoryl)serine.

Belongs to the acyl carrier protein (ACP) family. 4'-phosphopantetheine is transferred from CoA to a specific serine of apo-ACP by AcpS. This modification is essential for activity because fatty acids are bound in thioester linkage to the sulfhydryl of the prosthetic group.

The protein resides in the cytoplasm. It functions in the pathway lipid metabolism; fatty acid biosynthesis. Its function is as follows. Carrier of the growing fatty acid chain in fatty acid biosynthesis. The polypeptide is Acyl carrier protein (Buchnera aphidicola subsp. Acyrthosiphon pisum (strain APS) (Acyrthosiphon pisum symbiotic bacterium)).